A 92-amino-acid chain; its full sequence is Small ribosomal subunit protein uS19 (92 aa).

This sequence belongs to the universal ribosomal protein uS19 family.

Protein S19 forms a complex with S13 that binds strongly to the 16S ribosomal RNA. The polypeptide is Small ribosomal subunit protein uS19 (Bacillus mycoides (strain KBAB4) (Bacillus weihenstephanensis)).